The primary structure comprises 130 residues: Mitochondrial import protein 1 (130 aa).

The disordered stretch occupies residues 1–41 (MSAEEISNPLAESGVTISSDSEQYSAPESASPQSPSSSSPA). Over residues 15–24 (VTISSDSEQY) the composition is skewed to polar residues. Low complexity predominate over residues 25–41 (SAPESASPQSPSSSSPA).

The protein belongs to the MIM1 family.

The protein resides in the mitochondrion outer membrane. In terms of biological role, required for the assembly of the TOM (translocase of outer membrane) receptor complex, which is responsible for the recognition and translocation of cytosolically synthesized mitochondrial preproteins. The polypeptide is Mitochondrial import protein 1 (Neurospora crassa (strain ATCC 24698 / 74-OR23-1A / CBS 708.71 / DSM 1257 / FGSC 987)).